Here is a 461-residue protein sequence, read N- to C-terminus: ADP-specific phosphofructokinase (461 aa).

The ADPK domain maps to 1–457 (MVRELLEKAR…FTSYLAMLKE (457 aa)). Mg(2+) contacts are provided by E268, E298, and D441. The Proton acceptor role is filled by D441.

This sequence belongs to the carbohydrate kinase PfkC family. Mg(2+) is required as a cofactor.

The protein resides in the cytoplasm. It catalyses the reaction beta-D-fructose 6-phosphate + ADP = beta-D-fructose 1,6-bisphosphate + AMP + H(+). The protein operates within carbohydrate degradation; glycolysis. Catalyzes the phosphorylation of fructose 6-phosphate to fructose 1,6-bisphosphate using ADP as the phosphate donor. This chain is ADP-specific phosphofructokinase, found in Thermococcus kodakarensis (strain ATCC BAA-918 / JCM 12380 / KOD1) (Pyrococcus kodakaraensis (strain KOD1)).